The sequence spans 219 residues: Small ribosomal subunit protein uS5 (219 aa).

Positions 1-32 (MSHPQSRPGGRDGRPRRRREPREEAPWVPKTA) are disordered. In terms of domain architecture, S5 DRBM spans 68-131 (LKTEVVDVGI…NQALLNVGPI (64 aa)).

It belongs to the universal ribosomal protein uS5 family. Part of the 30S ribosomal subunit. Contacts protein S4.

In terms of biological role, with S4 and S12 plays an important role in translational accuracy. The polypeptide is Small ribosomal subunit protein uS5 (rps5) (Cenarchaeum symbiosum (strain A)).